The following is a 272-amino-acid chain: Protein UL11 (272 aa).

The N-terminal stretch at 1-31 (MLFRYITFHREKVLYLTAACIFGVYISLHDA) is a signal peptide. The Extracellular portion of the chain corresponds to 32–224 (CIPVVGKIGT…PLQPSPQHQH (193 aa)). 4 N-linked (GlcNAc...) asparagine; by host glycosylation sites follow: asparagine 42, asparagine 93, asparagine 100, and asparagine 142. The segment at 142–200 (NGTFPTTTTKKPTTTTRTTTTTTQRTTTTRTTTTAKKTTISTTHHKHPSPKKSTTPNSH) is disordered. Residues 147-183 (TTTTKKPTTTTRTTTTTTQRTTTTRTTTTAKKTTIST) are compositionally biased toward low complexity. A helical membrane pass occupies residues 225-245 (LATHALWVLAVVIVIIIIIIF). Residues 246 to 272 (YFRIPQKLWLLWQHDKHGIVLIPQTDL) lie on the Cytoplasmic side of the membrane.

Belongs to the RL11 family. In terms of assembly, interacts with host PTPRC; this interaction affects T-cell signaling. Post-translationally, glycosylated.

It is found in the host cell membrane. The protein localises to the host endoplasmic reticulum. In terms of biological role, plays a role in the modulation of host immune response by modulating T-cell function. Interacts with host PTPRC/CD45 and thereby reduces host TCR signaling and T-cell proliferation. The polypeptide is Protein UL11 (UL11) (Human cytomegalovirus (strain Merlin) (HHV-5)).